A 333-amino-acid chain; its full sequence is Glyceraldehyde-3-phosphate dehydrogenase 1 (333 aa).

NAD(+)-binding positions include 12-13 (RI), D35, and R79. D-glyceraldehyde 3-phosphate contacts are provided by residues 152–154 (SCT), T183, R198, 211–212 (SG), and R234. The active-site Nucleophile is C153. N314 provides a ligand contact to NAD(+).

The protein belongs to the glyceraldehyde-3-phosphate dehydrogenase family. As to quaternary structure, homotetramer.

It localises to the cytoplasm. The catalysed reaction is D-glyceraldehyde 3-phosphate + phosphate + NAD(+) = (2R)-3-phospho-glyceroyl phosphate + NADH + H(+). It functions in the pathway carbohydrate degradation; glycolysis; pyruvate from D-glyceraldehyde 3-phosphate: step 1/5. With respect to regulation, resistant to pentalenolactone (PL). Functionally, catalyzes the oxidative phosphorylation of glyceraldehyde 3-phosphate (G3P) to 1,3-bisphosphoglycerate (BPG) using the cofactor NAD. The first reaction step involves the formation of a hemiacetal intermediate between G3P and a cysteine residue, and this hemiacetal intermediate is then oxidized to a thioester, with concomitant reduction of NAD to NADH. The reduced NADH is then exchanged with the second NAD, and the thioester is attacked by a nucleophilic inorganic phosphate to produce BPG. This chain is Glyceraldehyde-3-phosphate dehydrogenase 1 (gap1), found in Streptomyces arenae.